The following is a 98-amino-acid chain: NADH-ubiquinone oxidoreductase chain 4L (98 aa).

The next 3 helical transmembrane spans lie at 1 to 21, 26 to 46, and 59 to 79; these read MTPT…GLTF, LLSA…SMAL, and APML…ALLV.

It belongs to the complex I subunit 4L family. In terms of assembly, core subunit of respiratory chain NADH dehydrogenase (Complex I) which is composed of 45 different subunits.

The protein resides in the mitochondrion inner membrane. It carries out the reaction a ubiquinone + NADH + 5 H(+)(in) = a ubiquinol + NAD(+) + 4 H(+)(out). Its function is as follows. Core subunit of the mitochondrial membrane respiratory chain NADH dehydrogenase (Complex I) which catalyzes electron transfer from NADH through the respiratory chain, using ubiquinone as an electron acceptor. Part of the enzyme membrane arm which is embedded in the lipid bilayer and involved in proton translocation. This Danio rerio (Zebrafish) protein is NADH-ubiquinone oxidoreductase chain 4L (mt-nd4l).